The following is a 239-amino-acid chain: tRNA (guanine-N(1)-)-methyltransferase (239 aa).

S-adenosyl-L-methionine is bound by residues Gly108 and 127–132 (LGDYVL).

It belongs to the RNA methyltransferase TrmD family. In terms of assembly, homodimer.

It localises to the cytoplasm. It carries out the reaction guanosine(37) in tRNA + S-adenosyl-L-methionine = N(1)-methylguanosine(37) in tRNA + S-adenosyl-L-homocysteine + H(+). Its function is as follows. Specifically methylates guanosine-37 in various tRNAs. The polypeptide is tRNA (guanine-N(1)-)-methyltransferase (Streptococcus pneumoniae serotype 19F (strain G54)).